The primary structure comprises 209 residues: Kunitz trypsin inhibitor 1 (209 aa).

The signal sequence occupies residues 1-22 (MKATISITTIFLVVALAAPSLA). 2 disulfides stabilise this stretch: cysteine 63–cysteine 107 and cysteine 154–cysteine 162. N-linked (GlcNAc...) asparagine glycosylation is present at asparagine 156.

Belongs to the protease inhibitor I3 (leguminous Kunitz-type inhibitor) family.

Exhibits Kunitz trypsin protease inhibitor activity. The chain is Kunitz trypsin inhibitor 1 from Arabidopsis thaliana (Mouse-ear cress).